Reading from the N-terminus, the 60-residue chain is uncharacterized protein (60 aa).

A helical membrane pass occupies residues 14-34 (MLFLGTIGLAVVVGGLMAYGY). Positions 38-60 (GKTPSSGTSFHTASPSFSSRYRY) are disordered. Positions 40–60 (TPSSGTSFHTASPSFSSRYRY) are enriched in polar residues.

The protein localises to the host membrane. This is an uncharacterized protein from Dryophytes versicolor (chameleon treefrog).